The following is a 178-amino-acid chain: Large ribosomal subunit protein uL6 (178 aa).

Belongs to the universal ribosomal protein uL6 family. Part of the 50S ribosomal subunit.

Functionally, this protein binds to the 23S rRNA, and is important in its secondary structure. It is located near the subunit interface in the base of the L7/L12 stalk, and near the tRNA binding site of the peptidyltransferase center. The chain is Large ribosomal subunit protein uL6 from Helicobacter pylori (strain P12).